Here is a 343-residue protein sequence, read N- to C-terminus: Endoglucanase C (343 aa).

Glutamate 140 serves as the catalytic Proton donor. Residue glutamate 280 is the Nucleophile of the active site.

It belongs to the glycosyl hydrolase 5 (cellulase A) family.

The catalysed reaction is Endohydrolysis of (1-&gt;4)-beta-D-glucosidic linkages in cellulose, lichenin and cereal beta-D-glucans.. It functions in the pathway glycan metabolism; cellulose degradation. This enzyme catalyzes the endohydrolysis of 1,4-beta-glucosidic linkages in cellulose, lichenin and cereal beta-D-glucans. This chain is Endoglucanase C (celC), found in Acetivibrio thermocellus (strain ATCC 27405 / DSM 1237 / JCM 9322 / NBRC 103400 / NCIMB 10682 / NRRL B-4536 / VPI 7372) (Clostridium thermocellum).